We begin with the raw amino-acid sequence, 482 residues long: Glycogen synthase (482 aa).

Residue Lys-20 participates in ADP-alpha-D-glucose binding.

Belongs to the glycosyltransferase 1 family. Bacterial/plant glycogen synthase subfamily.

The enzyme catalyses [(1-&gt;4)-alpha-D-glucosyl](n) + ADP-alpha-D-glucose = [(1-&gt;4)-alpha-D-glucosyl](n+1) + ADP + H(+). Its pathway is glycan biosynthesis; glycogen biosynthesis. Its function is as follows. Synthesizes alpha-1,4-glucan chains using ADP-glucose. The sequence is that of Glycogen synthase from Aliivibrio salmonicida (strain LFI1238) (Vibrio salmonicida (strain LFI1238)).